The primary structure comprises 160 residues: Gene 34 protein (160 aa).

Polar residues predominate over residues 1 to 11 (MDSPRGISTAT). The interval 1–26 (MDSPRGISTATGDAHAEAAVSPAAEI) is disordered.

The sequence is that of Gene 34 protein from Equus caballus (Horse).